The chain runs to 448 residues: UPF0210 protein Pars_1033 (448 aa).

It belongs to the UPF0210 family.

This Pyrobaculum arsenaticum (strain DSM 13514 / JCM 11321 / PZ6) protein is UPF0210 protein Pars_1033.